An 84-amino-acid chain; its full sequence is uncharacterized protein (84 aa).

Over residues 34 to 54 (ATSTASSSAAKNTTSSSKNAA) the composition is skewed to low complexity. A disordered region spans residues 34–57 (ATSTASSSAAKNTTSSSKNAAPGM). N45 is a glycosylation site (N-linked (GlcNAc...) asparagine). Residues 66-83 (YGIIMAAFAAVSFVLGTG) form a helical membrane-spanning segment.

The protein resides in the endoplasmic reticulum membrane. This is an uncharacterized protein from Saccharomyces cerevisiae (strain ATCC 204508 / S288c) (Baker's yeast).